The chain runs to 306 residues: Bifunctional protein FolD (306 aa).

NADP(+) contacts are provided by residues 169–171 (GRS), Ser194, and Ile235.

This sequence belongs to the tetrahydrofolate dehydrogenase/cyclohydrolase family. Homodimer.

It carries out the reaction (6R)-5,10-methylene-5,6,7,8-tetrahydrofolate + NADP(+) = (6R)-5,10-methenyltetrahydrofolate + NADPH. The enzyme catalyses (6R)-5,10-methenyltetrahydrofolate + H2O = (6R)-10-formyltetrahydrofolate + H(+). It functions in the pathway one-carbon metabolism; tetrahydrofolate interconversion. Catalyzes the oxidation of 5,10-methylenetetrahydrofolate to 5,10-methenyltetrahydrofolate and then the hydrolysis of 5,10-methenyltetrahydrofolate to 10-formyltetrahydrofolate. The sequence is that of Bifunctional protein FolD from Thermosynechococcus vestitus (strain NIES-2133 / IAM M-273 / BP-1).